An 896-amino-acid polypeptide reads, in one-letter code: Lipoxygenase 2, chloroplastic (896 aa).

The transit peptide at 1-56 (MYCRESLSSLQTLNVAKSLSSLFPKQSALINPISAGRRNNLPRPNLRRRCKVTASR) directs the protein to the chloroplast. In terms of domain architecture, PLAT spans 79–199 (ITAQEEFLEG…VDPTKRIFFS (121 aa)). The EIF4E2 binding stretch occupies residues 175–232 (GSITFTCESWVAPKSVDPTKRIFFSDKSYLPSQTPEPLKKYRKEELETLQGKNREEVG). A Lipoxygenase domain is found at 202–896 (SYLPSQTPEP…GMGVPYSISI (695 aa)). H554, H559, H746, N750, and I896 together coordinate Fe cation.

This sequence belongs to the lipoxygenase family. Interacts with EIF4E2. Fe cation serves as cofactor. In terms of tissue distribution, in leaves and inflorescences but not abundant in seeds, roots and stems.

It localises to the plastid. The protein localises to the chloroplast. Its subcellular location is the cytoplasm. The enzyme catalyses (9Z,12Z)-octadecadienoate + O2 = (13S)-hydroperoxy-(9Z,11E)-octadecadienoate. It carries out the reaction (9Z,12Z,15Z)-octadecatrienoate + O2 = (13S)-hydroperoxy-(9Z,11E,15Z)-octadecatrienoate. The protein operates within lipid metabolism; oxylipin biosynthesis. Functionally, 13S-lipoxygenase that can use linolenic acid as substrates. Plant lipoxygenases may be involved in a number of diverse aspects of plant physiology including growth and development, pest resistance, and senescence or responses to wounding. Catalyzes the hydroperoxidation of lipids containing a cis,cis-1,4-pentadiene structure. Required for the wound-induced synthesis of jasmonic acid (JA) in leaves. The sequence is that of Lipoxygenase 2, chloroplastic (LOX2) from Arabidopsis thaliana (Mouse-ear cress).